The chain runs to 101 residues: NADH-quinone oxidoreductase subunit K (101 aa).

Helical transmembrane passes span 4-24, 29-49, and 61-81; these read VYDYLVLGVILFGLSLVGIML, IILLLVCVELMLLAVNTNFIA, and VFVFFILTVAAAEAAIGLAIV.

Belongs to the complex I subunit 4L family. In terms of assembly, NDH-1 is composed of 14 different subunits. Subunits NuoA, H, J, K, L, M, N constitute the membrane sector of the complex.

It localises to the cell inner membrane. The enzyme catalyses a quinone + NADH + 5 H(+)(in) = a quinol + NAD(+) + 4 H(+)(out). NDH-1 shuttles electrons from NADH, via FMN and iron-sulfur (Fe-S) centers, to quinones in the respiratory chain. The immediate electron acceptor for the enzyme in this species is believed to be ubiquinone. Couples the redox reaction to proton translocation (for every two electrons transferred, four hydrogen ions are translocated across the cytoplasmic membrane), and thus conserves the redox energy in a proton gradient. This is NADH-quinone oxidoreductase subunit K from Legionella pneumophila (strain Paris).